Consider the following 624-residue polypeptide: MENSDSNDKGSGDQSAAQRRSQMDRLDREEAFYQFVNNLSEEDYRLMRDNNLLGTPGESTEEELLRRLQQIKEGPPPQNSDENRGGDSSDDVSNGDSIIDWLNSVRQTGNTTRSGQRGNQSWRAVSRTNPNSGDFRFSLEINVNRNNGSQNSENENEPSARRSSGENVENNSQRQVENPRSESTSARPSRSERNSTEALTEVPPTRGQRRARSRSPDHRRTRARAERSRSPLHPMSEIPRRSHHSISSQTFEHPLVNETEGSSRTRHHVTLRQQISGPELLSRGLFAASGTRNASQGAGSSDTAASGESTGSGQRPPTIVLDLQVRRVRPGEYRQRDSIASRTRSRSQTPNNTVTYESERGGFRRTFSRSERAGVRTYVSTIRIPIRRILNTGLSETTSVAIQTMLRQIMTGFGELSYFMYSDSDSEPTGSVSNRNMERAESRSGRGGSGGGSSSGSSSSSSSSSSSSSSSSSSSSPSSSSGGESSETSSDLFEGSNEGSSSSGSSGARREGRHRAPVTFDESGSLPFLSLAQFFLLNEDDDDQPRGLTKEQIDNLAMRSFGENDALKTCSVCITEYTEGNKLRKLPCSHEYHVHCIDRWLSENSTCPICRRAVLASGNRESVV.

An N-acetylmethionine modification is found at methionine 1. Residues 1-11 show a composition bias toward basic and acidic residues; it reads MENSDSNDKGS. Disordered regions lie at residues 1-25, 72-251, 257-276, 291-363, and 424-522; these read MENS…QMDR, KEGP…SQTF, NETE…QQIS, TRNA…RGGF, and SDSE…TFDE. The span at 104 to 132 shows a compositional bias: polar residues; the sequence is SVRQTGNTTRSGQRGNQSWRAVSRTNPNS. Low complexity predominate over residues 142–153; the sequence is NVNRNNGSQNSE. Residue serine 164 is modified to Phosphoserine. The span at 165–188 shows a compositional bias: polar residues; it reads GENVENNSQRQVENPRSESTSARP. Phosphoserine is present on residues serine 195, serine 228, serine 230, and serine 276. Positions 214–229 are enriched in basic and acidic residues; that stretch reads RSPDHRRTRARAERSR. The segment covering 291–315 has biased composition (polar residues); sequence TRNASQGAGSSDTAASGESTGSGQR. Residues 329-339 show a composition bias toward basic and acidic residues; sequence RPGEYRQRDSI. The segment covering 340 to 356 has biased composition (polar residues); sequence ASRTRSRSQTPNNTVTY. Residues 445 to 454 show a composition bias toward gly residues; the sequence is GRGGSGGGSS. The segment covering 455 to 507 has biased composition (low complexity); that stretch reads SGSSSSSSSSSSSSSSSSSSSSPSSSSGGESSETSSDLFEGSNEGSSSSGSSG. An RING-type zinc finger spans residues 570–611; it reads CSVCITEYTEGNKLRKLPCSHEYHVHCIDRWLSENSTCPICR. The PDZ-binding signature appears at 621–624; sequence ESVV.

The protein belongs to the RNF12 family. Interacts with LIM/homeobox factors such as LHX3. Interacts with LDB1, LDB2 and SIN3A. Interacts with LIMK1. Interacts (via N-terminus) with TERF1. Interacts (via C-terminus) with ESR1. In terms of tissue distribution, expressed in many tissues.

The protein resides in the nucleus. It carries out the reaction S-ubiquitinyl-[E2 ubiquitin-conjugating enzyme]-L-cysteine + [acceptor protein]-L-lysine = [E2 ubiquitin-conjugating enzyme]-L-cysteine + N(6)-ubiquitinyl-[acceptor protein]-L-lysine.. It functions in the pathway protein modification; protein ubiquitination. Functionally, E3 ubiquitin-protein ligase. Acts as a negative coregulator for LIM homeodomain transcription factors by mediating the ubiquitination and subsequent degradation of LIM cofactors LDB1 and LDB2 and by mediating the recruitment the SIN3a/histone deacetylase corepressor complex. Ubiquitination and degradation of LIM cofactors LDB1 and LDB2 allows DNA-bound LIM homeodomain transcription factors to interact with other protein partners such as RLIM. Plays a role in telomere length-mediated growth suppression by mediating the ubiquitination and degradation of TERF1. By targeting ZFP42 for degradation, acts as an activator of random inactivation of X chromosome in the embryo, a stochastic process in which one X chromosome is inactivated to minimize sex-related dosage differences of X-encoded genes in somatic cells of female placental mammals. This Homo sapiens (Human) protein is E3 ubiquitin-protein ligase RLIM (RLIM).